The sequence spans 504 residues: MKNEKRKTGIEPKVFFPPLIIVGILCWLTVRDLDAANVVINAVFSYVTNVWGWAFEWYMVVMLFGWFWLVFGPYAKKRLGNEPPEFSTASWIFMMFASCTSAAVLFWGSIEIYYYISTPPFGLEPNSTGAKELGLAYSLFHWGPLPWATYSFLSVAFAYFFFVRKMEVIRPSSTLVPLVGEKHAKGLFGTIVDNFYLVALIFAMGTSLGLATPLVTECMQWLFGIPHTLQLDAIIITCWIILNAICVACGLQKGVRIASDVRSYLSFLMLGWVFIVSGASFIMNYFTDSVGMLLMYLPRMLFYTDPIAKGGFPQGWTVFYWAWWVIYAIQMSIFLARISRGRTVRELCFGMVLGLTASTWILWTVLGSNTLLLIDKNIINIPNLIEQYGVARAIIETWAALPLSTATMWGFFILCFIATVTLVNACSYTLAMSTCREVRDGEEPPLLVRIGWSVLVGIIGIVLLALGGLKPIQTAIIAGGCPLFFVNIMVTLSFIKDAKQNWKD.

A run of 12 helical transmembrane segments spans residues 10–30 (IEPK…WLTV), 51–71 (WGWA…WLVF), 92–112 (IFMM…SIEI), 143–163 (GPLP…FFFV), 195–215 (FYLV…TPLV), 231–251 (LDAI…ACGL), 263–283 (SYLS…SFIM), 316–336 (WTVF…IFLA), 347–367 (LCFG…TVLG), 398–418 (WAAL…CFIA), 446–466 (LLVR…LLAL), and 475–495 (AIIA…LSFI).

The protein belongs to the BCCT transporter (TC 2.A.15) family. CaiT subfamily. Homotrimer.

Its subcellular location is the cell inner membrane. It catalyses the reaction 4-(trimethylamino)butanoate(in) + (R)-carnitine(out) = 4-(trimethylamino)butanoate(out) + (R)-carnitine(in). The protein operates within amine and polyamine metabolism; carnitine metabolism. Functionally, catalyzes the exchange of L-carnitine for gamma-butyrobetaine. The polypeptide is L-carnitine/gamma-butyrobetaine antiporter (Escherichia coli O6:K15:H31 (strain 536 / UPEC)).